The primary structure comprises 492 residues: Cobyric acid synthase (492 aa).

Positions 259–453 (HTTVAVVAYP…LHGLFEDAVA (195 aa)) constitute a GATase cobBQ-type domain. Cys-340 serves as the catalytic Nucleophile. The active site involves His-445.

It belongs to the CobB/CobQ family. CobQ subfamily.

The protein operates within cofactor biosynthesis; adenosylcobalamin biosynthesis. Its function is as follows. Catalyzes amidations at positions B, D, E, and G on adenosylcobyrinic A,C-diamide. NH(2) groups are provided by glutamine, and one molecule of ATP is hydrogenolyzed for each amidation. This is Cobyric acid synthase from Paracidovorax citrulli (strain AAC00-1) (Acidovorax citrulli).